The following is a 311-amino-acid chain: RNA polymerase sigma factor SigA4 (311 aa).

The tract at residues 78-148 (MLKANLRLVV…TRAIDNHART (71 aa)) is sigma-70 factor domain-2. An Interaction with polymerase core subunit RpoC motif is present at residues 102 to 105 (DLIQ). Residues 157–234 (EKISRIKKMT…DPKSLEPMDA (78 aa)) are sigma-70 factor domain-3. The sigma-70 factor domain-4 stretch occupies residues 247-304 (WLAHLTEREQQVLQLRFGLHDGEQHTLAEIGRRLNVSRERIRQVEARALQKLRVLSQQ). Residues 273-292 (LAEIGRRLNVSRERIRQVEA) constitute a DNA-binding region (H-T-H motif).

It belongs to the sigma-70 factor family.

Its subcellular location is the cytoplasm. Functionally, sigma factors are initiation factors that promote the attachment of RNA polymerase to specific initiation sites and are then released. This chain is RNA polymerase sigma factor SigA4 (sigA4), found in Synechococcus elongatus (strain ATCC 33912 / PCC 7942 / FACHB-805) (Anacystis nidulans R2).